We begin with the raw amino-acid sequence, 489 residues long: NF-kappa-B inhibitor cactus (489 aa).

A compositionally biased stretch (low complexity) spans 1–26 (MPSPTKAAEAATKATATSDCSCSAAS). Disordered regions lie at residues 1–138 (MPSP…SMRL) and 163–203 (NNLG…APPS). S45 is subject to Phosphoserine; by PKC. Over residues 69–86 (NETSDSGFISGPQSSQIC) the composition is skewed to polar residues. At S135 the chain carries Phosphoserine; by PKC. The span at 163 to 180 (NNLGQSSSTQITGRSKFQ) shows a compositional bias: polar residues. T174 is modified (phosphothreonine; by PKC). Residues 181–203 (SSTASTANANPSGXGATSSAPPS) are compositionally biased toward low complexity. 5 ANK repeats span residues 220–252 (DGDT…LLNI), 256–285 (VAQT…EVRD), 287–316 (HGNT…ATEI), 350–379 (DGER…DINA), and 384–413 (SGRT…KLNL). The residue at position 308 (T308) is a Phosphothreonine; by PKC. Residue S384 is modified to Phosphoserine; by PKC.

It localises to the cytoplasm. Involved in the formation of the dorsoventral pattern. It inhibits nuclear translocation of the dorsal morphogen in the dorsal region of the embryo. The polypeptide is NF-kappa-B inhibitor cactus (cact) (Drosophila yakuba (Fruit fly)).